We begin with the raw amino-acid sequence, 182 residues long: Large ribosomal subunit protein uL10 (182 aa).

This sequence belongs to the universal ribosomal protein uL10 family. As to quaternary structure, part of the ribosomal stalk of the 50S ribosomal subunit. The N-terminus interacts with L11 and the large rRNA to form the base of the stalk. The C-terminus forms an elongated spine to which L12 dimers bind in a sequential fashion forming a multimeric L10(L12)X complex.

In terms of biological role, forms part of the ribosomal stalk, playing a central role in the interaction of the ribosome with GTP-bound translation factors. This chain is Large ribosomal subunit protein uL10, found in Koribacter versatilis (strain Ellin345).